A 255-amino-acid polypeptide reads, in one-letter code: NAD-dependent protein deacylase (255 aa).

The Deacetylase sirtuin-type domain maps to Met1–Phe252. NAD(+) is bound at residue Gly9–Trp28. Tyr53 and Arg56 together coordinate substrate. Gln103–Asp106 provides a ligand contact to NAD(+). The Proton acceptor role is filled by His121. Cys129, Cys132, Cys148, and Cys151 together coordinate Zn(2+). NAD(+) contacts are provided by residues Gly190 to Ser192, Asn218 to Gln220, and Thr238.

The protein belongs to the sirtuin family. Class III subfamily. The cofactor is Zn(2+).

It localises to the cytoplasm. The catalysed reaction is N(6)-acetyl-L-lysyl-[protein] + NAD(+) + H2O = 2''-O-acetyl-ADP-D-ribose + nicotinamide + L-lysyl-[protein]. It carries out the reaction N(6)-succinyl-L-lysyl-[protein] + NAD(+) + H2O = 2''-O-succinyl-ADP-D-ribose + nicotinamide + L-lysyl-[protein]. Functionally, NAD-dependent lysine deacetylase and desuccinylase that specifically removes acetyl and succinyl groups on target proteins. Modulates the activities of several proteins which are inactive in their acylated form. This is NAD-dependent protein deacylase from Helicobacter hepaticus (strain ATCC 51449 / 3B1).